Reading from the N-terminus, the 260-residue chain is Ribosomal RNA small subunit methyltransferase J (260 aa).

Residues 125–126 (ER) and Asp179 contribute to the S-adenosyl-L-methionine site.

The protein belongs to the methyltransferase superfamily. RsmJ family.

Its subcellular location is the cytoplasm. The enzyme catalyses guanosine(1516) in 16S rRNA + S-adenosyl-L-methionine = N(2)-methylguanosine(1516) in 16S rRNA + S-adenosyl-L-homocysteine + H(+). Its function is as follows. Specifically methylates the guanosine in position 1516 of 16S rRNA. The sequence is that of Ribosomal RNA small subunit methyltransferase J from Pseudomonas fluorescens (strain ATCC BAA-477 / NRRL B-23932 / Pf-5).